We begin with the raw amino-acid sequence, 1213 residues long: Genetic suppressor element 1 (1213 aa).

Positions 1-154 (MKGMSHEPKS…GSRGSSSGRE (154 aa)) are disordered. Serine 10 carries the phosphoserine modification. A compositionally biased stretch (polar residues) spans 15–33 (MLSTATRTTATVNPLTPSP). Composition is skewed to low complexity over residues 51–63 (SAQA…FAAA) and 76–89 (GSSL…VSSP). A phosphoserine mark is found at serine 84 and serine 95. The segment covering 103 to 114 (VPMGPIIVPPGG) has biased composition (low complexity). Asymmetric dimethylarginine is present on arginine 305. A coiled-coil region spans residues 319–402 (HSERMSSLSA…REKELLAAKA (84 aa)). Residues 326 to 384 (LSAERLQMDEELRREREREREREREADREREKEREREQREKEREKELEREREKEREREL) form a disordered region. Residues 331-384 (LQMDEELRREREREREREREADREREKEREREQREKEREKELEREREKEREREL) show a composition bias toward basic and acidic residues. The residue at position 433 (threonine 433) is a Phosphothreonine. An N6-acetyllysine modification is found at lysine 496. 2 disordered regions span residues 527-579 (LDLG…QHTV) and 630-719 (SEKA…TARG). Basic and acidic residues-rich tracts occupy residues 537 to 560 (EAEH…REPP) and 630 to 643 (SEKA…EATP). Positions 648-657 (QPPPPPPPPR) are enriched in pro residues. Over residues 681 to 700 (STQTILGQQRPSLSQATSFG) the composition is skewed to polar residues. At lysine 739 the chain carries N6-acetyllysine. A phosphoserine mark is found at serine 766, serine 826, serine 828, and serine 857. Disordered regions lie at residues 816–858 (RKRR…NNSP), 898–979 (LSAA…EAPG), and 1065–1118 (ELQS…PRRQ). Over residues 847–858 (TRYSPDEMNNSP) the composition is skewed to polar residues. Phosphothreonine is present on threonine 905. Phosphoserine is present on serine 907. The span at 1065–1081 (ELQSSSRVPLPQHNGQQ) shows a compositional bias: polar residues. Residues 1093-1197 (QEADQDSEED…ELDHLRKCLA (105 aa)) are a coiled coil. Acidic residues predominate over residues 1095 to 1112 (ADQDSEEDSEEDSEEEAE). Serine 1099 bears the Phosphoserine mark.

As to quaternary structure, may be a component of a BHC histone deacetylase complex that contains HDAC1, HDAC2, HMG20B/BRAF35, KDM1A, RCOR1/CoREST, PHF21A/BHC80, ZMYM2, ZNF217, ZMYM3, GSE1 and GTF2I.

This is Genetic suppressor element 1 (Gse1) from Mus musculus (Mouse).